A 548-amino-acid chain; its full sequence is Acetamidase (548 aa).

Catalysis depends on charge relay system residues Lys-129 and Ser-204. Ser-228 functions as the Acyl-ester intermediate in the catalytic mechanism.

The protein belongs to the amidase family.

The catalysed reaction is a monocarboxylic acid amide + H2O = a monocarboxylate + NH4(+). It carries out the reaction acetamide + H2O = acetate + NH4(+). In terms of biological role, allows acetamide to be used as a sole carbon or nitrogen source. In Emericella nidulans (strain FGSC A4 / ATCC 38163 / CBS 112.46 / NRRL 194 / M139) (Aspergillus nidulans), this protein is Acetamidase (amdS).